A 599-amino-acid polypeptide reads, in one-letter code: Elongation factor 4 (599 aa).

The tr-type G domain occupies Lys-2–Gln-185. GTP is bound by residues Asn-14–Thr-19 and Asn-132–Asp-135.

Belongs to the TRAFAC class translation factor GTPase superfamily. Classic translation factor GTPase family. LepA subfamily.

It is found in the cell inner membrane. It carries out the reaction GTP + H2O = GDP + phosphate + H(+). Required for accurate and efficient protein synthesis under certain stress conditions. May act as a fidelity factor of the translation reaction, by catalyzing a one-codon backward translocation of tRNAs on improperly translocated ribosomes. Back-translocation proceeds from a post-translocation (POST) complex to a pre-translocation (PRE) complex, thus giving elongation factor G a second chance to translocate the tRNAs correctly. Binds to ribosomes in a GTP-dependent manner. This is Elongation factor 4 from Blochmanniella floridana.